Here is a 179-residue protein sequence, read N- to C-terminus: MSRVGKQPVEIPSGVTVTVTPDNVVTVKGTKGQLEKAMHKDMKIAVEDNKVVVTRPSDSKNHKALHGLTRALINNMVIGVTEGFSKTLQLVGVGYKAQLKGKSLILNLGYSHPIEVASIEGVTFEIPDANTVVVKGINKELVGSVAADIRTFRKPEPYKGKGIKYSDEVIRRKEGKTGK.

The protein belongs to the universal ribosomal protein uL6 family. In terms of assembly, part of the 50S ribosomal subunit.

Functionally, this protein binds to the 23S rRNA, and is important in its secondary structure. It is located near the subunit interface in the base of the L7/L12 stalk, and near the tRNA binding site of the peptidyltransferase center. This chain is Large ribosomal subunit protein uL6, found in Clostridium acetobutylicum (strain ATCC 824 / DSM 792 / JCM 1419 / IAM 19013 / LMG 5710 / NBRC 13948 / NRRL B-527 / VKM B-1787 / 2291 / W).